Here is a 29-residue protein sequence, read N- to C-terminus: Cyclotide psyleio C (29 aa).

Residues 1 to 29 constitute a cross-link (cyclopeptide (Gly-Arg)); it reads GDLPVCGETCFGGTCNTPGCVCAWPVCTR. Disulfide bonds link C6–C20, C10–C22, and C15–C27.

In terms of processing, this is a cyclic peptide.

In terms of biological role, probably participates in a plant defense mechanism. This chain is Cyclotide psyleio C, found in Psychotria leiocarpa.